The following is a 183-amino-acid chain: ATP synthase subunit delta (183 aa).

This sequence belongs to the ATPase delta chain family. In terms of assembly, F-type ATPases have 2 components, F(1) - the catalytic core - and F(0) - the membrane proton channel. F(1) has five subunits: alpha(3), beta(3), gamma(1), delta(1), epsilon(1). F(0) has three main subunits: a(1), b(2) and c(10-14). The alpha and beta chains form an alternating ring which encloses part of the gamma chain. F(1) is attached to F(0) by a central stalk formed by the gamma and epsilon chains, while a peripheral stalk is formed by the delta and b chains.

It localises to the cell inner membrane. Functionally, f(1)F(0) ATP synthase produces ATP from ADP in the presence of a proton or sodium gradient. F-type ATPases consist of two structural domains, F(1) containing the extramembraneous catalytic core and F(0) containing the membrane proton channel, linked together by a central stalk and a peripheral stalk. During catalysis, ATP synthesis in the catalytic domain of F(1) is coupled via a rotary mechanism of the central stalk subunits to proton translocation. This protein is part of the stalk that links CF(0) to CF(1). It either transmits conformational changes from CF(0) to CF(1) or is implicated in proton conduction. The polypeptide is ATP synthase subunit delta (Nitratidesulfovibrio vulgaris (strain ATCC 29579 / DSM 644 / CCUG 34227 / NCIMB 8303 / VKM B-1760 / Hildenborough) (Desulfovibrio vulgaris)).